Reading from the N-terminus, the 447-residue chain is Exodeoxyribonuclease 7 large subunit (447 aa).

Belongs to the XseA family. As to quaternary structure, heterooligomer composed of large and small subunits.

The protein resides in the cytoplasm. It carries out the reaction Exonucleolytic cleavage in either 5'- to 3'- or 3'- to 5'-direction to yield nucleoside 5'-phosphates.. Bidirectionally degrades single-stranded DNA into large acid-insoluble oligonucleotides, which are then degraded further into small acid-soluble oligonucleotides. In Pediococcus pentosaceus (strain ATCC 25745 / CCUG 21536 / LMG 10740 / 183-1w), this protein is Exodeoxyribonuclease 7 large subunit.